A 207-amino-acid chain; its full sequence is Guanylate kinase (207 aa).

Positions 4–184 (GTLYIVSAPS…ALSDLKTIIR (181 aa)) constitute a Guanylate kinase-like domain. 11–18 (APSGAGKS) provides a ligand contact to ATP.

It belongs to the guanylate kinase family.

It is found in the cytoplasm. The enzyme catalyses GMP + ATP = GDP + ADP. It carries out the reaction dZMP + ATP = dZDP + ADP. The protein operates within purine metabolism. Its function is as follows. Essential for recycling GMP and indirectly, cGMP. (Microbial infection) Catalyzes the phosphorylation of dZMP to dZDP, when the bacterium is infected by a phage that produces the substrate for the synthesis of dZTP (2- amino-2'-deoxyadenosine 5'-triphosphate), which is then used by the phage as a DNA polymerase substrate. The sequence is that of Guanylate kinase from Salmonella choleraesuis (strain SC-B67).